The following is a 343-amino-acid chain: Aspartate beta-hydroxylase domain-containing protein 2 (343 aa).

Residues 1–31 (MWLEWLVAWSWSLDGLRDCIATGIQSVRDCD) are Cytoplasmic-facing. The helical transmembrane segment at 32-52 (GTAVITVACLLILFVWYCYHV) threads the bilayer. Residues 53-343 (GREQPRPHVS…ALDFIFAPGR (291 aa)) are Lumenal-facing. Residues Asn77 and Asn185 are each glycosylated (N-linked (GlcNAc...) asparagine). 2 residues coordinate 2-oxoglutarate: Trp202 and Ser246. His257 provides a ligand contact to Fe cation. 266-268 (RCH) serves as a coordination point for 2-oxoglutarate. Residue His302 participates in Fe cation binding. Arg315 lines the 2-oxoglutarate pocket.

This sequence belongs to the aspartyl/asparaginyl beta-hydroxylase family. Requires Fe cation as cofactor.

The protein localises to the membrane. Functionally, may function as 2-oxoglutarate-dependent dioxygenase. This Mus musculus (Mouse) protein is Aspartate beta-hydroxylase domain-containing protein 2 (Asphd2).